Reading from the N-terminus, the 396-residue chain is Putative nickel insertion protein (396 aa).

A disordered region spans residues 333-355 (RSKLARESQTVETPDGPAKGKTV).

The protein belongs to the LarC family.

The sequence is that of Putative nickel insertion protein from Rhodopirellula baltica (strain DSM 10527 / NCIMB 13988 / SH1).